The primary structure comprises 252 residues: Transcriptional regulatory protein HptR (252 aa).

Residues 3–118 (KVVICDDERI…QLEVILGRLV (116 aa)) form the Response regulatory domain. D55 carries the post-translational modification 4-aspartylphosphate. Positions 153–250 (NQIVDQIKQS…QMSPSDYCKQ (98 aa)) constitute an HTH araC/xylS-type domain. DNA-binding regions (H-T-H motif) lie at residues 170–191 (SDLI…KDHV) and 217–240 (HYEI…KKYL).

Post-translationally, phosphorylated by HptS.

It is found in the cytoplasm. Its function is as follows. Member of the two-component regulatory system HptS/HptR that regulates genes involved in hexose phosphate transport system in response to changes in extracellular phosphate sources. Activates uhpT expression to facilitate glucose-6-phosphate/G6P utilization by directly binding to its promoter. Antagonizes CcpA-dependent transcription of a subset of CcpA-regulated genes involved in antibiotic susceptibility. This is Transcriptional regulatory protein HptR (hptR) from Staphylococcus aureus (strain MRSA252).